Consider the following 269-residue polypeptide: Novel plant SNARE 13 (269 aa).

At 1–217 (MASNLPMSPQ…IGRQVATDKC (217 aa)) the chain is on the cytoplasmic side. Positions 33 to 94 (DKIKDSTRQS…KQSMIKELNS (62 aa)) form a coiled coil. Residue serine 74 is modified to Phosphoserine. Positions 146–208 (MKRMDETDQA…KKASQLVKEI (63 aa)) constitute a t-SNARE coiled-coil homology domain. Residues 218–238 (IMGFLFLIVCGVVAIIIVKIV) traverse the membrane as a helical; Anchor for type IV membrane protein segment. Over 239–269 (NPNNKDIRDIPGLAPPAQSRKLLYLRNQDYM) the chain is Vesicular.

The protein belongs to the novel plant SNARE family.

It localises to the membrane. In terms of biological role, vesicle trafficking protein that functions in the secretory pathway. The protein is Novel plant SNARE 13 (NPSN13) of Arabidopsis thaliana (Mouse-ear cress).